The primary structure comprises 193 residues: NADH-quinone oxidoreductase subunit B (193 aa).

[4Fe-4S] cluster-binding residues include Cys-72, Cys-73, Cys-137, and Cys-167.

This sequence belongs to the complex I 20 kDa subunit family. In terms of assembly, NDH-1 is composed of 14 different subunits. Subunits NuoB, C, D, E, F, and G constitute the peripheral sector of the complex. The cofactor is [4Fe-4S] cluster.

It localises to the cell inner membrane. It catalyses the reaction a quinone + NADH + 5 H(+)(in) = a quinol + NAD(+) + 4 H(+)(out). Functionally, NDH-1 shuttles electrons from NADH, via FMN and iron-sulfur (Fe-S) centers, to quinones in the respiratory chain. The immediate electron acceptor for the enzyme in this species is believed to be ubiquinone. Couples the redox reaction to proton translocation (for every two electrons transferred, four hydrogen ions are translocated across the cytoplasmic membrane), and thus conserves the redox energy in a proton gradient. The protein is NADH-quinone oxidoreductase subunit B of Rhizobium rhizogenes (strain K84 / ATCC BAA-868) (Agrobacterium radiobacter).